A 2696-amino-acid chain; its full sequence is Protein ILITYHIA (2696 aa).

Polar residues predominate over residues 1–18; that stretch reads MSYSMVNASSAVSSPETA. The segment at 1-26 is disordered; it reads MSYSMVNASSAVSSPETAKNSDEPPP. HEAT repeat units follow at residues 162-204, 253-290, 303-340, 364-400, 401-438, 487-525, 526-562, 564-601, and 642-677; these read DIAP…MKTF, STQA…IYSL, KDSP…DVLN, EFQT…IDLS, KYAL…KSSN, SLSR…RSSV, AIQP…NPDT, SQIS…SKIA, and VVCV…FLLC. Positions 901-941 are disordered; sequence KQEPSSNHSLKKGLASRETANSGRRDTAKLTKKADKGKTAK. Basic and acidic residues predominate over residues 923–941; that stretch reads GRRDTAKLTKKADKGKTAK. HEAT repeat units follow at residues 985 to 1021, 1082 to 1118, 1188 to 1225, 1273 to 1311, 1315 to 1355, 1358 to 1395, 1397 to 1433, 1436 to 1474, 1478 to 1515, 1516 to 1553, 1564 to 1600, 1601 to 1638, 1640 to 1677, 1683 to 1720, 1722 to 1759, 1761 to 1797, 1801 to 1838, and 1840 to 1876; these read HSQL…CTVQ, DTFT…GLQA, HDLG…ESPS, KDLP…KHGK, SLLF…HLAR, PKVH…SKQE, APAL…GFGI, LKKY…KLGK, PYVI…QLSA, YGVK…CAPQ, PKLT…VIKN, PEIS…NSVD, PSLA…LVTE, PYIG…GMGE, NFPD…ALGT, YFEN…SLGA, KYLQ…HHAT, and SLPL…KVAG. Serine 1887 is subject to Phosphoserine. 19 HEAT repeats span residues 1908 to 1945, 1949 to 1986, 1988 to 2024, 2029 to 2066, 2067 to 2102, 2104 to 2137, 2138 to 2175, 2177 to 2213, 2217 to 2254, 2258 to 2292, 2293 to 2330, 2335 to 2373, 2377 to 2414, 2416 to 2450, 2455 to 2492, 2494 to 2530, 2536 to 2573, 2580 to 2617, and 2620 to 2658; these read DKRN…NTPK, EIMP…KLGE, VLPL…SAGR, SFMD…SAGL, QAMD…VRTA, VLPH…AGFN, THLG…VIDE, GVET…SSKL, DEAP…SVPK, PSYI…LCLP, KSLK…VTSE, EFVI…RGGM, PFLP…LSTR, DPLV…HAGK, AVRV…YLEA, QLSV…HNPS, SLFS…KQLA, KVVI…DNPS, and MANI…LTKG.

It belongs to the GCN1 family.

Its function is as follows. Involved in immunity against bacterial infection and in non-host resistance. Required for embryo development. Required for systemic acquired resistance, but functions in an salicylic acid-independent manner. Required for bacterium-triggered stomatal closure response. In Arabidopsis thaliana (Mouse-ear cress), this protein is Protein ILITYHIA.